A 409-amino-acid polypeptide reads, in one-letter code: Peptidase T (409 aa).

H78 serves as a coordination point for Zn(2+). Residue D80 is part of the active site. D140 provides a ligand contact to Zn(2+). The active-site Proton acceptor is E173. Zn(2+) is bound by residues E174, D196, and H379.

Belongs to the peptidase M20B family. The cofactor is Zn(2+).

The protein localises to the cytoplasm. The catalysed reaction is Release of the N-terminal residue from a tripeptide.. Functionally, cleaves the N-terminal amino acid of tripeptides. The protein is Peptidase T of Salmonella enteritidis PT4 (strain P125109).